Consider the following 448-residue polypeptide: Arginine synthetase ArcE (448 aa).

In terms of assembly, probably forms homotetramers and higher assemblies of tetramers. Mg(2+) serves as cofactor.

It carries out the reaction L-arginine + ADP + phosphate + H(+) = L-citrulline + NH4(+) + ATP. Its pathway is amino-acid biosynthesis; L-proline biosynthesis. It functions in the pathway amino-acid degradation; L-arginine degradation. The protein operates within amino-acid biosynthesis; L-arginine biosynthesis. Arginine deiminase involved in an arginine synthetase pathway, which provides citrulline and ornithine, the precursors for proline biosynthesis. Catalyzes the conversion of L-arginine to citrulline while conserving the energy of arginine deimination to generate ATP from ADP and free phosphate. Is specific toward L-arginine and cannot use D-arginine, agmatine, guanidine, L-alanine-L-arginine dipeptide and L-arginine-L-alanine dipeptide. Can also use CDP, GDP or UDP, with lower activity (38%, 8.4% and 13.3%, respectively). The enzyme can also catalyze the reverse reaction: the ATP-dependent generation of arginine from citrulline in a single reaction by using free ammonia, without the requirement of aspartic acid. In vivo, most likely functions in the arginine catabolism to produce citrulline for proline biosynthesis while also generating ATP, but it can also contribute to arginine biosynthesis when the necessary precursors such as citrulline are abundant. This Thermococcus kodakarensis (strain ATCC BAA-918 / JCM 12380 / KOD1) (Pyrococcus kodakaraensis (strain KOD1)) protein is Arginine synthetase ArcE.